The chain runs to 424 residues: Serine hydroxymethyltransferase (424 aa).

(6S)-5,6,7,8-tetrahydrofolate is bound by residues leucine 113 and 117-119; that span reads GHL. Residue lysine 222 is modified to N6-(pyridoxal phosphate)lysine. 361 to 363 serves as a coordination point for (6S)-5,6,7,8-tetrahydrofolate; the sequence is SPF.

Belongs to the SHMT family. Homodimer. Pyridoxal 5'-phosphate serves as cofactor.

It localises to the cytoplasm. The catalysed reaction is (6R)-5,10-methylene-5,6,7,8-tetrahydrofolate + glycine + H2O = (6S)-5,6,7,8-tetrahydrofolate + L-serine. Its pathway is one-carbon metabolism; tetrahydrofolate interconversion. The protein operates within amino-acid biosynthesis; glycine biosynthesis; glycine from L-serine: step 1/1. Functionally, catalyzes the reversible interconversion of serine and glycine with tetrahydrofolate (THF) serving as the one-carbon carrier. This reaction serves as the major source of one-carbon groups required for the biosynthesis of purines, thymidylate, methionine, and other important biomolecules. Also exhibits THF-independent aldolase activity toward beta-hydroxyamino acids, producing glycine and aldehydes, via a retro-aldol mechanism. The chain is Serine hydroxymethyltransferase from Flavobacterium johnsoniae (strain ATCC 17061 / DSM 2064 / JCM 8514 / BCRC 14874 / CCUG 350202 / NBRC 14942 / NCIMB 11054 / UW101) (Cytophaga johnsonae).